Consider the following 434-residue polypeptide: Gamma-enolase (434 aa).

His158 and Glu167 together coordinate substrate. The Proton donor role is filled by Glu210. Residues Asp245, Glu293, and Asp318 each coordinate Mg(2+). Substrate contacts are provided by Glu293 and Asp318. The Proton acceptor role is filled by Lys343. Substrate contacts are provided by residues Ser370–Ser373 and Lys394.

Belongs to the enolase family. In terms of assembly, homodimer. Mg(2+) is required as a cofactor. In terms of tissue distribution, expressed in the brain and, to much less but significant extents, in the pituitary and adrenal glands.

Its subcellular location is the cytoplasm. The catalysed reaction is (2R)-2-phosphoglycerate = phosphoenolpyruvate + H2O. The protein operates within carbohydrate degradation; glycolysis; pyruvate from D-glyceraldehyde 3-phosphate: step 4/5. This Gallus gallus (Chicken) protein is Gamma-enolase (ENO2).